The sequence spans 380 residues: Cytochrome b (380 aa).

A run of 4 helical transmembrane segments spans residues Phe-34–Met-54, Trp-78–Ile-99, Trp-114–Leu-134, and Phe-179–Thr-199. His-84 and His-98 together coordinate heme b. The heme b site is built by His-183 and His-197. An a ubiquinone-binding site is contributed by His-202. Helical transmembrane passes span Leu-227–Ser-247, Leu-289–His-309, Leu-321–Ser-341, and Phe-348–Pro-368.

Belongs to the cytochrome b family. The cytochrome bc1 complex contains 11 subunits: 3 respiratory subunits (MT-CYB, CYC1 and UQCRFS1), 2 core proteins (UQCRC1 and UQCRC2) and 6 low-molecular weight proteins (UQCRH/QCR6, UQCRB/QCR7, UQCRQ/QCR8, UQCR10/QCR9, UQCR11/QCR10 and a cleavage product of UQCRFS1). This cytochrome bc1 complex then forms a dimer. It depends on heme b as a cofactor.

It localises to the mitochondrion inner membrane. In terms of biological role, component of the ubiquinol-cytochrome c reductase complex (complex III or cytochrome b-c1 complex) that is part of the mitochondrial respiratory chain. The b-c1 complex mediates electron transfer from ubiquinol to cytochrome c. Contributes to the generation of a proton gradient across the mitochondrial membrane that is then used for ATP synthesis. The chain is Cytochrome b (MT-CYB) from Macronectes halli (Hall's giant petrel).